Reading from the N-terminus, the 458-residue chain is D-inositol 3-phosphate glycosyltransferase (458 aa).

His-16 contacts 1D-myo-inositol 3-phosphate. UDP-N-acetyl-alpha-D-glucosamine-binding positions include 22–23 and Gly-30; that span reads QP. 1D-myo-inositol 3-phosphate contacts are provided by residues 27–32, Lys-85, Tyr-118, Thr-142, and Arg-162; that span reads DAGGMN. 3 residues coordinate UDP-N-acetyl-alpha-D-glucosamine: Arg-236, Lys-241, and Gln-302. Residues Tyr-311, Arg-312, and Ser-314 each coordinate Mg(2+). 2 residues coordinate UDP-N-acetyl-alpha-D-glucosamine: Glu-324 and Glu-332. Thr-338 provides a ligand contact to Mg(2+). A disordered region spans residues 428 to 458; the sequence is VAAQNVTGSSSRTRRPWRRRRSTLLPMTGRS. A compositionally biased stretch (basic residues) spans 439 to 449; sequence RTRRPWRRRRS.

Belongs to the glycosyltransferase group 1 family. MshA subfamily. In terms of assembly, homodimer.

The enzyme catalyses 1D-myo-inositol 3-phosphate + UDP-N-acetyl-alpha-D-glucosamine = 1D-myo-inositol 2-acetamido-2-deoxy-alpha-D-glucopyranoside 3-phosphate + UDP + H(+). Functionally, catalyzes the transfer of a N-acetyl-glucosamine moiety to 1D-myo-inositol 3-phosphate to produce 1D-myo-inositol 2-acetamido-2-deoxy-glucopyranoside 3-phosphate in the mycothiol biosynthesis pathway. The chain is D-inositol 3-phosphate glycosyltransferase from Gordonia bronchialis (strain ATCC 25592 / DSM 43247 / BCRC 13721 / JCM 3198 / KCTC 3076 / NBRC 16047 / NCTC 10667) (Rhodococcus bronchialis).